A 36-amino-acid chain; its full sequence is Phosphoglycerate kinase, chloroplastic (36 aa).

(2R)-3-phosphoglycerate-binding residues include Ala22, Asp23, and Asn25.

The protein belongs to the phosphoglycerate kinase family. In terms of assembly, monomer. Requires Mg(2+) as cofactor.

The protein resides in the plastid. The protein localises to the chloroplast. The enzyme catalyses (2R)-3-phosphoglycerate + ATP = (2R)-3-phospho-glyceroyl phosphate + ADP. The protein operates within carbohydrate biosynthesis; Calvin cycle. The protein is Phosphoglycerate kinase, chloroplastic of Scenedesmus fuscus (Green alga).